Here is a 137-residue protein sequence, read N- to C-terminus: MPDVPSTLSHDWAFAVFLLGVCGLIAFMLGVSSLLGSKAWGRSKNEPFESGMLPTGNARLRLSAKFYLVAMLFVIFDVEALFLFAWAVSVRESGWVGLVGATVFITILFAGLVYESAIGALDWAPEGRRKRQAKLKQ.

The next 3 membrane-spanning stretches (helical) occupy residues 12-32 (WAFA…LGVS), 68-88 (LVAM…AWAV), and 94-114 (GWVG…GLVY).

This sequence belongs to the complex I subunit 3 family. NDH-1 is composed of 13 different subunits. Subunits NuoA, H, J, K, L, M, N constitute the membrane sector of the complex.

The protein resides in the cell inner membrane. It catalyses the reaction a quinone + NADH + 5 H(+)(in) = a quinol + NAD(+) + 4 H(+)(out). Functionally, NDH-1 shuttles electrons from NADH, via FMN and iron-sulfur (Fe-S) centers, to quinones in the respiratory chain. The immediate electron acceptor for the enzyme in this species is believed to be ubiquinone. Couples the redox reaction to proton translocation (for every two electrons transferred, four hydrogen ions are translocated across the cytoplasmic membrane), and thus conserves the redox energy in a proton gradient. The protein is NADH-quinone oxidoreductase subunit A of Ectopseudomonas mendocina (strain ymp) (Pseudomonas mendocina).